We begin with the raw amino-acid sequence, 108 residues long: ADM5 (108 aa).

Residues 1-18 (MTAHILLLWLFASSILGD) form the signal peptide. Residues 19–25 (PDSAGRL) constitute a propeptide that is removed on maturation. An intrachain disulfide couples Cys-38 to Cys-43. Positions 61–108 (KELSGKAGRKPQDPYSYGRRRRRRRRRREARLLRRLQDPSLRRAQLAG) are disordered. Tyrosine amide is present on Tyr-77. Over residues 78–89 (GRRRRRRRRRRE) the composition is skewed to basic residues. Residues 89 to 108 (EARLLRRLQDPSLRRAQLAG) constitute a propeptide that is removed on maturation. Residues 90 to 101 (ARLLRRLQDPSL) show a composition bias toward basic and acidic residues.

The protein belongs to the adrenomedullin family. As to expression, expressed abundantly in the spleen and thymus. Also expressed in adrenal and pituitary. Not expressed in brain, heart, kidney, liver and stomach.

It localises to the secreted. Seems to have a peripheral vasodepressor effect and a central vasopressor effect. In Sus scrofa (Pig), this protein is ADM5 (ADM5).